Here is a 1811-residue protein sequence, read N- to C-terminus: Protein virilizer homolog (1811 aa).

N-acetylalanine is present on Ala-2. A disordered region spans residues 132–302; sequence ISHDRDSPPP…EGDDGYEQIS (171 aa). Phosphoserine occurs at positions 133 and 138. A compositionally biased stretch (pro residues) spans 139–152; the sequence is PPPPPPPPPPPQPQ. Over residues 160-169 the composition is skewed to basic and acidic residues; that stretch reads KHADGEKEDQ. A Phosphoserine modification is found at Ser-173. The span at 174-190 shows a compositional bias: pro residues; it reads PPRPQPRGPRTPPGPPP. Thr-184 is subject to Phosphothreonine. Position 222 is a phosphoserine (Ser-222). The segment covering 224-233 has biased composition (polar residues); it reads DRNSVPQEGQ. Acidic residues-rich tracts occupy residues 234–267 and 274–302; these read YSDE…DEDD and IPDD…EQIS. Tyr-913 is subject to Phosphotyrosine. A Phosphoserine modification is found at Ser-1578. 2 disordered regions span residues 1615–1634 and 1662–1811; these read HVVP…GIRP and KEVV…SFTR. Gly residues predominate over residues 1688–1697; the sequence is GFSGNRGGRG. A Phosphothreonine modification is found at Thr-1707. An Omega-N-methylarginine modification is found at Arg-1722. Over residues 1722-1747 the composition is skewed to polar residues; it reads RGSSWSAQNTPRGNYNESRGGQSNFN. Arg-1740 is subject to Asymmetric dimethylarginine; alternate. Omega-N-methylarginine; alternate is present on Arg-1740. Asymmetric dimethylarginine occurs at positions 1772, 1774, and 1792. A compositionally biased stretch (gly residues) spans 1787–1801; the sequence is GSGGSRGKFVSGGSG. Residues 1802–1811 show a composition bias toward basic residues; it reads RGRHVRSFTR.

Belongs to the vir family. As to quaternary structure, component of the WMM complex, a N6-methyltransferase complex composed of a catalytic subcomplex, named MAC, and of an associated subcomplex, named MACOM. The MAC subcomplex is composed of METTL3 and METTL14. The MACOM subcomplex is composed of WTAP, ZC3H13, CBLL1/HAKAI, VIRMA, and, in some cases of RBM15 (RBM15 or RBM15B). Interacts with WTAP. Also a component of a MACOM-like complex, named WTAP complex, composed of WTAP, ZC3H13, CBLL1, VIRMA, RBM15, BCLAF1 and THRAP3. Interacts with NUDT21 and CPSF6.

The protein resides in the nucleus speckle. It is found in the nucleus. The protein localises to the nucleoplasm. It localises to the cytoplasm. Functionally, associated component of the WMM complex, a complex that mediates N6-methyladenosine (m6A) methylation of RNAs, a modification that plays a role in the efficiency of mRNA splicing and RNA processing. Acts as a key regulator of m6A methylation by promoting m6A methylation of mRNAs in the 3'-UTR near the stop codon: recruits the catalytic core components METTL3 and METTL14, thereby guiding m6A methylation at specific sites. Required for mRNA polyadenylation via its role in selective m6A methylation: m6A methylation of mRNAs in the 3'-UTR near the stop codon correlating with alternative polyadenylation (APA). The protein is Protein virilizer homolog of Mus musculus (Mouse).